The following is a 103-amino-acid chain: Phosphoribosyl-ATP pyrophosphatase (103 aa).

Belongs to the PRA-PH family.

It localises to the cytoplasm. It carries out the reaction 1-(5-phospho-beta-D-ribosyl)-ATP + H2O = 1-(5-phospho-beta-D-ribosyl)-5'-AMP + diphosphate + H(+). The protein operates within amino-acid biosynthesis; L-histidine biosynthesis; L-histidine from 5-phospho-alpha-D-ribose 1-diphosphate: step 2/9. The sequence is that of Phosphoribosyl-ATP pyrophosphatase from Cereibacter sphaeroides (strain ATCC 17025 / ATH 2.4.3) (Rhodobacter sphaeroides).